The chain runs to 356 residues: Cobalt-precorrin-5B C(1)-methyltransferase (356 aa).

This sequence belongs to the CbiD family.

The enzyme catalyses Co-precorrin-5B + S-adenosyl-L-methionine = Co-precorrin-6A + S-adenosyl-L-homocysteine. Its pathway is cofactor biosynthesis; adenosylcobalamin biosynthesis; cob(II)yrinate a,c-diamide from sirohydrochlorin (anaerobic route): step 6/10. Catalyzes the methylation of C-1 in cobalt-precorrin-5B to form cobalt-precorrin-6A. This Geobacter sp. (strain M21) protein is Cobalt-precorrin-5B C(1)-methyltransferase.